The following is a 243-amino-acid chain: MVQPRTSKTESPASAPGASAQMDDVVDTLTSLRLTNSALRREASTLRAEKANLTNMLESVMAELTLLRTRARIPGALQITPPISAITSNGTRPMTTPPTSLPEPFSGDPGQLAGFLMQMDRFMIFQASRFPGEAERVAFLVSRLTGEAEKWAIPHMQPDSPLRNNYQGFLAELRRTYKSPLRHSRRAQIRKTSASNRAVRERERERQMLCRQLAAAGTGSCPVHPASNGTNPAPALPSRGRNL.

Residues 1 to 12 (MVQPRTSKTESP) are compositionally biased toward polar residues. A disordered region spans residues 1 to 22 (MVQPRTSKTESPASAPGASAQM). The stretch at 29-69 (LTSLRLTNSALRREASTLRAEKANLTNMLESVMAELTLLRT) forms a coiled coil. 2 disordered regions span residues 84-105 (SAIT…PEPF) and 218-243 (TGSC…GRNL). The span at 85-94 (AITSNGTRPM) shows a compositional bias: polar residues.

Belongs to the LDOC1 family. As to expression, widely expressed.

This is Retrotransposon Gag-like protein 6 from Mus musculus (Mouse).